The chain runs to 493 residues: MPVPPPPAPPPPPTFALANTEKPTLNKTEQAGRNALLSDISKGKKLKKTVTNDRSAPILDKPKGAGASAGGYGGGGGGGGGGGGGGGGSGGNFGGGGPPGLGGLFQAGMPKLRSTANRDNDSGGSRPPILPPGGRATSAKPFSPPSGPGRFPAPSPGHRSGPPEPPRNRMPPPRPDVGSKPDSLPPPVPNTPRPVPSSLHNRGSPAGLGAPRPPFPGNRGAAFGAGSARQNPSGSSSPFPRPPLPPTPSRALDDKPPPPPPPVGNRPSMHREAVPPPPSQTSKPPVPSTPRPGLGSQAPPPPPPPSRPGPPPLPPASNDEIPRLPQRNLSLTSSAPPLPSPGRSGPLPPPPSERPPPPVRDPPGRSGPLPPPPPINRNGSTARALPATPQLPSRSGMDSPRSGPRPPLPPDRPGAGAPPPPPPSTSVRNGFQDSSCEDEWESRFYFHPISDLPPPEPYVPTTKTYPSKLARNESRSGSNRRERGAPPLPPIPR.

A compositionally biased stretch (pro residues) spans 1–14; it reads MPVPPPPAPPPPPT. A disordered region spans residues 1–493; that stretch reads MPVPPPPAPP…GAPPLPPIPR (493 aa). The span at 21-31 shows a compositional bias: polar residues; the sequence is EKPTLNKTEQA. The region spanning 32 to 49 is the WH2 domain; that stretch reads GRNALLSDISKGKKLKKT. An Asymmetric dimethylarginine modification is found at R33. Residues 45–48 form a binds actin region; the sequence is KLKK. Residues 67–105 show a composition bias toward gly residues; it reads ASAGGYGGGGGGGGGGGGGGGGSGGNFGGGGPPGLGGLF. 2 positions are modified to omega-N-methylarginine: R126 and R135. 3 stretches are compositionally biased toward pro residues: residues 142–155, 162–175, and 183–195; these read FSPP…PAPS, PPEP…PPRP, and SLPP…PRPV. The residue at position 143 (S143) is a Phosphoserine. At S227 the chain carries Phosphoserine. Composition is skewed to pro residues over residues 239 to 248, 274 to 290, and 298 to 315; these read FPRPPLPPTP, VPPP…PSTP, and APPP…PLPP. 2 positions are modified to phosphoserine: S330 and S340. A compositionally biased stretch (pro residues) spans 336–361; it reads PPLPSPGRSGPLPPPPSERPPPPVRD. XRSGPXPPXP motif repeat units lie at residues 342–351, 364–373, and 400–409; these read GRSGPLPPPP and PRSGPRPPLP. Residues 403–424 show a composition bias toward pro residues; sequence GPRPPLPPDRPGAGAPPPPPPS. The segment covering 425 to 434 has biased composition (polar residues); that stretch reads TSVRNGFQDS. Residues 470–484 show a composition bias toward basic and acidic residues; the sequence is ARNESRSGSNRRERG.

It belongs to the verprolin family. As to quaternary structure, binds to WAS within the N-terminal region, at a site distinct from the CDC42-binding site. Binds profilin and actin. Binds to WASL. Interacts with DBNL. Interacts with DBNL. Interacts with FNBP1L (via the SH3 domain).

The protein localises to the cytoplasmic vesicle. It is found in the cytoplasm. It localises to the cytoskeleton. Its subcellular location is the cell projection. The protein resides in the ruffle. Functionally, plays a role in the reorganization of the actin cytoskeleton. Contributes with NCK1 and GRB2 in the recruitment and activation of WASL. May participate in regulating the subcellular localization of WASL, resulting in the disassembly of stress fibers in favor of filopodia formation. Plays a role in the formation of cell ruffles. The chain is WAS/WASL-interacting protein family member 1 (Wipf1) from Mus musculus (Mouse).